The chain runs to 277 residues: Leucine-rich repeat-containing protein 10 (277 aa).

LRR repeat units lie at residues 53-74 (ELVK…LGQL), 76-97 (NLQI…VCTL), 99-120 (QLCI…LSLL), 122-143 (NLRT…VCEL), 145-167 (LLKT…RRLQ), 168-189 (ELRT…LLHM), and 191-212 (FLEV…AHLS).

It localises to the nucleus. Functionally, may play important roles in cardiac development and/or cardiac function. This chain is Leucine-rich repeat-containing protein 10 (LRRC10), found in Homo sapiens (Human).